The sequence spans 252 residues: Triosephosphate isomerase (252 aa).

10–12 (NWK) is a binding site for substrate. Catalysis depends on His-96, which acts as the Electrophile. Glu-168 serves as the catalytic Proton acceptor. Substrate-binding positions include Gly-174, Ser-213, and 234-235 (GG).

It belongs to the triosephosphate isomerase family. In terms of assembly, homodimer.

The protein resides in the cytoplasm. It carries out the reaction D-glyceraldehyde 3-phosphate = dihydroxyacetone phosphate. It functions in the pathway carbohydrate biosynthesis; gluconeogenesis. The protein operates within carbohydrate degradation; glycolysis; D-glyceraldehyde 3-phosphate from glycerone phosphate: step 1/1. Involved in the gluconeogenesis. Catalyzes stereospecifically the conversion of dihydroxyacetone phosphate (DHAP) to D-glyceraldehyde-3-phosphate (G3P). The chain is Triosephosphate isomerase from Nitrosomonas europaea (strain ATCC 19718 / CIP 103999 / KCTC 2705 / NBRC 14298).